We begin with the raw amino-acid sequence, 552 residues long: Membrane protein insertase YidC (552 aa).

A helical membrane pass occupies residues 3-23; it reads TKRLILFVIFSFSILMLWDSW. The tract at residues 29 to 65 is disordered; that stretch reads PPAASQTQTTAQSVEDGSVPQAAKSSASAANQASVPA. 4 helical membrane-spanning segments follow: residues 359–379, 429–449, 463–483, and 503–523; these read WGVAIILLTILIKLVFYPLSA, LPILVQIPVFIALYWVLLGSV, LSAVDPYYVLPILMGITMIIQ, and PIVFSVFFFFFPAGLVLYWLV.

This sequence belongs to the OXA1/ALB3/YidC family. Type 1 subfamily. In terms of assembly, interacts with the Sec translocase complex via SecD. Specifically interacts with transmembrane segments of nascent integral membrane proteins during membrane integration.

The protein resides in the cell inner membrane. Functionally, required for the insertion and/or proper folding and/or complex formation of integral membrane proteins into the membrane. Involved in integration of membrane proteins that insert both dependently and independently of the Sec translocase complex, as well as at least some lipoproteins. Aids folding of multispanning membrane proteins. The chain is Membrane protein insertase YidC from Methylobacillus flagellatus (strain ATCC 51484 / DSM 6875 / VKM B-1610 / KT).